Consider the following 354-residue polypeptide: Glycine betaine/proline betaine transport system permease protein ProW (354 aa).

Positions 1-41 are disordered; the sequence is MADQNNPWDTTPAADSAAQSADAWGTPTTAPTDGGGADWLT. Topologically, residues 1–99 are cytoplasmic; the sequence is MADQNNPWDT…VDYILNGFQQ (99 aa). A compositionally biased stretch (low complexity) spans 13 to 32; that stretch reads AADSAAQSADAWGTPTTAPT. The helical transmembrane segment at 100–120 threads the bilayer; that stretch reads LLLGMPAPVAIIVFALIAWQI. Residue S121 is a topological domain, periplasmic. The chain crosses the membrane as a helical span at residues 122-142; it reads GVGMGVATLVSLIAIGAIGAW. Topologically, residues 143–148 are cytoplasmic; it reads SQAMVT. In terms of domain architecture, ABC transmembrane type-1 spans 145 to 324; the sequence is AMVTLALVLT…ILAIILDRLT (180 aa). The helical transmembrane segment at 149-169 threads the bilayer; sequence LALVLTALLFCIVIGLPLGIW. The Periplasmic segment spans residues 170–198; sequence LARSPRAAKIIRPLLDAMQTTPAFVYLVP. Residues 199–219 form a helical membrane-spanning segment; that stretch reads IVMLFGIGNVPGVVVTIIFAL. Residues 220-270 lie on the Cytoplasmic side of the membrane; it reads PPIIRLTILGINQVPADLIEASRSFGASPRQMLFKVQLPLAMPTIMAGVNQ. A helical transmembrane segment spans residues 271-291; it reads TLMLALSMVVIASMIAVGGLG. Residues 292–300 lie on the Periplasmic side of the membrane; it reads QMVLRGIGR. Residues 301–321 form a helical membrane-spanning segment; the sequence is LDMGLATVGGVGIVILAIILD. Over 322–354 the chain is Cytoplasmic; that stretch reads RLTQAVGRDSRSRGNRRWYTTGPVGLLTRPFIK.

It belongs to the binding-protein-dependent transport system permease family. CysTW subfamily. As to quaternary structure, the complex is composed of two ATP-binding proteins (ProV), two transmembrane proteins (ProW) and a solute-binding protein (ProX).

The protein localises to the cell inner membrane. In terms of biological role, part of the ProU ABC transporter complex involved in glycine betaine and proline betaine uptake. Probably responsible for the translocation of the substrate across the membrane. In Escherichia coli (strain K12), this protein is Glycine betaine/proline betaine transport system permease protein ProW.